Here is a 296-residue protein sequence, read N- to C-terminus: NADH-cytochrome b5 reductase 2 (296 aa).

A helical membrane pass occupies residues 12-29 (LPIALGVGAASIATAIIL). An FAD-binding FR-type domain is found at 47 to 151 (NEWIDLPIIK…KGPITKWEWK (105 aa)). Position 154–189 (154–189 (SYDSITLLGAGTGINPLYQLVHHIAENPEDNTKIHL)) interacts with FAD.

This sequence belongs to the flavoprotein pyridine nucleotide cytochrome reductase family. It depends on FAD as a cofactor.

The protein localises to the mitochondrion outer membrane. The catalysed reaction is 2 Fe(III)-[cytochrome b5] + NADH = 2 Fe(II)-[cytochrome b5] + NAD(+) + H(+). Functionally, may mediate the reduction of outer membrane cytochrome b5. This chain is NADH-cytochrome b5 reductase 2 (MCR1), found in Kluyveromyces lactis (strain ATCC 8585 / CBS 2359 / DSM 70799 / NBRC 1267 / NRRL Y-1140 / WM37) (Yeast).